Consider the following 178-residue polypeptide: ATP synthase subunit delta (178 aa).

It belongs to the ATPase delta chain family. In terms of assembly, F-type ATPases have 2 components, F(1) - the catalytic core - and F(0) - the membrane proton channel. F(1) has five subunits: alpha(3), beta(3), gamma(1), delta(1), epsilon(1). F(0) has three main subunits: a(1), b(2) and c(10-14). The alpha and beta chains form an alternating ring which encloses part of the gamma chain. F(1) is attached to F(0) by a central stalk formed by the gamma and epsilon chains, while a peripheral stalk is formed by the delta and b chains.

Its subcellular location is the cell inner membrane. Its function is as follows. F(1)F(0) ATP synthase produces ATP from ADP in the presence of a proton or sodium gradient. F-type ATPases consist of two structural domains, F(1) containing the extramembraneous catalytic core and F(0) containing the membrane proton channel, linked together by a central stalk and a peripheral stalk. During catalysis, ATP synthesis in the catalytic domain of F(1) is coupled via a rotary mechanism of the central stalk subunits to proton translocation. In terms of biological role, this protein is part of the stalk that links CF(0) to CF(1). It either transmits conformational changes from CF(0) to CF(1) or is implicated in proton conduction. In Chromohalobacter salexigens (strain ATCC BAA-138 / DSM 3043 / CIP 106854 / NCIMB 13768 / 1H11), this protein is ATP synthase subunit delta.